The sequence spans 231 residues: MKRAVVVFSGGQDSTTCLIQALSQYDEVHCVTFDYGQRHRAEIDVARKLAMQLGARAHKVIDAGLLNALAVSSLTRDNITFPGYEDSAGGLPSTFVPGRNILFLTLAAIYAYQVEASAVITGVCETDFSGYPDCRDNFIKALNAAVNLGMARELSFVTPLMWLDKAETWALADYYHQLDRVRHDTLTCYNGIKGDGCGQCAACHLRTHGLAAYRAQPQAVMASLKAKTGLH.

8–18 lines the ATP pocket; that stretch reads FSGGQDSTTCL. Zn(2+) contacts are provided by C188, C197, C200, and C203.

Belongs to the QueC family. Requires Zn(2+) as cofactor.

It catalyses the reaction 7-carboxy-7-deazaguanine + NH4(+) + ATP = 7-cyano-7-deazaguanine + ADP + phosphate + H2O + H(+). The protein operates within purine metabolism; 7-cyano-7-deazaguanine biosynthesis. Catalyzes the ATP-dependent conversion of 7-carboxy-7-deazaguanine (CDG) to 7-cyano-7-deazaguanine (preQ(0)). This is 7-cyano-7-deazaguanine synthase from Sodalis glossinidius (strain morsitans).